Here is a 123-residue protein sequence, read N- to C-terminus: Aberrant microtubules protein 1 (123 aa).

Its function is as follows. Required for normal microtubule organization. This is Aberrant microtubules protein 1 (ABM1) from Saccharomyces cerevisiae (strain ATCC 204508 / S288c) (Baker's yeast).